Consider the following 578-residue polypeptide: Sulfite reductase [NADPH] hemoprotein beta-component (578 aa).

The segment covering 1–11 (MSANQQSNSQE) has biased composition (polar residues). Positions 1-20 (MSANQQSNSQEVLGEVLGPL) are disordered. [4Fe-4S] cluster contacts are provided by C441, C447, C487, and C491. C491 is a siroheme binding site.

The protein belongs to the nitrite and sulfite reductase 4Fe-4S domain family. As to quaternary structure, alpha(8)-beta(8). The alpha component is a flavoprotein, the beta component is a hemoprotein. Siroheme serves as cofactor. Requires [4Fe-4S] cluster as cofactor.

It catalyses the reaction hydrogen sulfide + 3 NADP(+) + 3 H2O = sulfite + 3 NADPH + 4 H(+). Its pathway is sulfur metabolism; hydrogen sulfide biosynthesis; hydrogen sulfide from sulfite (NADPH route): step 1/1. Its function is as follows. Component of the sulfite reductase complex that catalyzes the 6-electron reduction of sulfite to sulfide. This is one of several activities required for the biosynthesis of L-cysteine from sulfate. The protein is Sulfite reductase [NADPH] hemoprotein beta-component of Vibrio campbellii (strain ATCC BAA-1116).